The primary structure comprises 352 residues: MALAGPLKVCIVGSGNWGSAVAKIIGHNVKNLKKFASTVNMWVFEENINGRKLTEIINTEHENVKYLPGYKLPENVVAVPNLSDAVKDADLLIFVIPHQFIHKICQEISGKVHRNALGITLIKGIDEGPEGLRLISDIIREKMDIDVSVLMGANIANEVAAEKFCETTIGSKNKEHGLLFKELLQTPNFRITVVEDADTVELCGALKNIVAVAAGFCDGLGCGDNTKAAVIRLGLMEMIAFANVFCKGPVSIATFLESCGVADLITTCYGGRNRKVSEAFVKSGKSIEELEKEMLNGQKLQGPQTSAEVYRILQQKNMVNKFPLFTAVYQICYEGKPVEDVISCLQSHPEHM.

13 to 18 (GSGNWG) is an NAD(+) binding site. Lys-123 is a substrate binding site. Ala-156 serves as a coordination point for NAD(+). Lys-207 serves as the catalytic Proton acceptor. NAD(+)-binding residues include Arg-272, Lys-299, and Gln-301. Substrate is bound at residue 272-273 (RN).

It belongs to the NAD-dependent glycerol-3-phosphate dehydrogenase family.

The protein localises to the cytoplasm. The catalysed reaction is sn-glycerol 3-phosphate + NAD(+) = dihydroxyacetone phosphate + NADH + H(+). Plays a role in regulating cardiac sodium current. This chain is Glycerol-3-phosphate dehydrogenase 1-like protein (gpd1l), found in Xenopus tropicalis (Western clawed frog).